The primary structure comprises 121 residues: Large ribosomal subunit protein uL14c (121 aa).

Belongs to the universal ribosomal protein uL14 family. In terms of assembly, part of the 50S ribosomal subunit.

It is found in the plastid. The protein resides in the organellar chromatophore. In terms of biological role, binds to 23S rRNA. This is Large ribosomal subunit protein uL14c from Paulinella chromatophora.